A 573-amino-acid chain; its full sequence is Potassium-transporting ATPase potassium-binding subunit (573 aa).

A run of 10 helical transmembrane segments spans residues 3–23 (AEGLLQILLYLGLLAAVTPLL), 65–85 (GYTLALLSFNLLGLLLLYALL), 136–156 (GLTVQNFVSAATGIAVAVALI), 179–199 (LYVLLPLAFLGALVLVWQGVP), 254–274 (LTNLLESFYLLMIAAALIYSF), 286–306 (ALWTAVFILFVAGLAVTWWAE), 383–403 (AGLYGLLVFVILAVFIAGLMV), 423–443 (VIAVLVFPLGILGGAALTTVV), 489–509 (GLGLAMLLGRFAVIVPTLAIA), and 531–551 (LFITLLIATILIVGGLTFFPA).

Belongs to the KdpA family. As to quaternary structure, the system is composed of three essential subunits: KdpA, KdpB and KdpC.

The protein resides in the cell inner membrane. In terms of biological role, part of the high-affinity ATP-driven potassium transport (or Kdp) system, which catalyzes the hydrolysis of ATP coupled with the electrogenic transport of potassium into the cytoplasm. This subunit binds the periplasmic potassium ions and delivers the ions to the membrane domain of KdpB through an intramembrane tunnel. This Rhodospirillum centenum (strain ATCC 51521 / SW) protein is Potassium-transporting ATPase potassium-binding subunit.